Consider the following 757-residue polypeptide: Mitofusin-2 (757 aa).

Residues Met-1–Val-604 are Cytoplasmic-facing. A part of a helix bundle domain, formed by helices from N-terminal and C-terminal regions region spans residues Lys-30–Arg-94. The Dynamin-type G domain occupies Ala-93–Glu-342. The interval Gly-103–Ser-110 is G1 motif. A GTP-binding site is contributed by Ser-106 to Thr-111. The residue at position 111 (Thr-111) is a Phosphothreonine; by PINK1. The segment at Thr-129 to Thr-130 is G2 motif. The tract at residues Asp-199 to Gly-202 is G3 motif. Asn-258–Asp-261 is a binding site for GTP. The segment at Asn-258–Asp-261 is G4 motif. Position 288 (Glu-288) is a region of interest, G5 motif. Positions 305 and 307 each coordinate GTP. The part of a helix bundle domain, formed by helices from N-terminal and C-terminal regions stretch occupies residues Glu-359–Glu-385. Residues Lys-406–Ala-435 adopt a coiled-coil conformation. Ser-442 is modified (phosphoserine; by PINK1). Residues Thr-605–Val-625 traverse the membrane as a helical segment. Position 626 (Trp-626) is a topological domain, mitochondrial intermembrane. The helical transmembrane segment at Lys-627 to Tyr-647 threads the bilayer. Residues Glu-648–Arg-757 lie on the Cytoplasmic side of the membrane. Positions Phe-696–Ala-738 form a coiled coil. The segment at Glu-722–Leu-753 is part of a helix bundle domain, formed by helices from N-terminal and C-terminal regions.

This sequence belongs to the TRAFAC class dynamin-like GTPase superfamily. Dynamin/Fzo/YdjA family. Mitofusin subfamily. Forms homomultimers and heteromultimers with MFN1. Oligomerization is essential for mitochondrion fusion. Interacts with VAT1. Interacts with STOML2; may form heterooligomers. Interacts (phosphorylated) with PRKN. Interacts with EIF2AK3. Interacts with THG1L; THG1L probably functions as a guanyl-nucleotide exchange factor/GEF, activating MFN2. In terms of processing, phosphorylated by PINK1. Post-translationally, ubiquitinated by non-degradative ubiquitin by PRKN, promoting mitochondrial fusion; deubiquitination by USP30 inhibits mitochondrial fusion. Ubiquitinated by HUWE1 when dietary stearate (C18:0) levels are low; ubiquitination inhibits mitochondrial fusion. Ubiquitous. In brain, it is more expressed than MFN1, while it is expressed at a weaker level than MFN1 in heart and testis. Expressed at high level in elongating spermatids of seminiferous tubules. Expression is markedly down-regulated in highly proliferative vascular smooth muscle cells (VSMCs) from the genetic hypertensive animal model SHR, as well as in balloon-injured Wistar Kyoto arteries.

The protein resides in the mitochondrion outer membrane. It catalyses the reaction GTP + H2O = GDP + phosphate + H(+). In terms of biological role, mitochondrial outer membrane GTPase that mediates mitochondrial clustering and fusion. Mitochondria are highly dynamic organelles, and their morphology is determined by the equilibrium between mitochondrial fusion and fission events. Overexpression induces the formation of mitochondrial networks. Membrane clustering requires GTPase activity and may involve a major rearrangement of the coiled coil domains. Plays a central role in mitochondrial metabolism and may be associated with obesity and/or apoptosis processes. Plays an important role in the regulation of vascular smooth muscle cell proliferation. Involved in the clearance of damaged mitochondria via selective autophagy (mitophagy). Is required for PRKN recruitment to dysfunctional mitochondria. Involved in the control of unfolded protein response (UPR) upon ER stress including activation of apoptosis and autophagy during ER stress. Acts as an upstream regulator of EIF2AK3 and suppresses EIF2AK3 activation under basal conditions. The chain is Mitofusin-2 (Mfn2) from Rattus norvegicus (Rat).